The following is a 169-amino-acid chain: Putative lipocalin R877 (169 aa).

Positions 1 to 18 (MWIIILIVIIVIITIIFS) are cleaved as a signal peptide.

The protein belongs to the calycin superfamily. Lipocalin family.

The protein resides in the secreted. Its subcellular location is the virion. Its function is as follows. Could play a role in the transport of a small ligand. The chain is Putative lipocalin R877 from Acanthamoeba polyphaga mimivirus (APMV).